The primary structure comprises 351 residues: Transmembrane protein 255A (351 aa).

The next 4 membrane-spanning stretches (helical) occupy residues 30 to 50, 57 to 77, 89 to 109, and 226 to 246; these read IYVTVTLLIVSVLILTVGLAA, VTVGGYYPGVILGFGSFLGII, LVASIVFISFGVIAAFCCAIV, and TILNIVGLFLGIITAAVLGGF. The interval 302–331 is disordered; the sequence is FPSSPPSGLSDEQEPQSPSPSPSYMWSSSA.

The protein belongs to the TMEM255 family.

It localises to the membrane. The protein is Transmembrane protein 255A (Tmem255a) of Rattus norvegicus (Rat).